Here is a 704-residue protein sequence, read N- to C-terminus: Tryptophan synthase (704 aa).

The tryptophan synthase alpha chain stretch occupies residues 1–292; that stretch reads MEAIKKVFEQ…QLTPNAETAK (292 aa). Catalysis depends on proton acceptor residues Glu49 and Asp60. The segment at 293–704 is tryptophan synthase beta chain; that stretch reads GVENILPARF…HVSSNAIPSK (412 aa). Lys380 carries the post-translational modification N6-(pyridoxal phosphate)lysine.

In the N-terminal section; belongs to the TrpA family. This sequence in the C-terminal section; belongs to the TrpB family. Pyridoxal 5'-phosphate serves as cofactor.

It catalyses the reaction (1S,2R)-1-C-(indol-3-yl)glycerol 3-phosphate + L-serine = D-glyceraldehyde 3-phosphate + L-tryptophan + H2O. It participates in amino-acid biosynthesis; L-tryptophan biosynthesis; L-tryptophan from chorismate: step 5/5. The protein is Tryptophan synthase (TRP-1) of Coprinopsis cinerea (strain Okayama-7 / 130 / ATCC MYA-4618 / FGSC 9003) (Inky cap fungus).